The primary structure comprises 37 residues: Myo-inositol-binding protein (37 aa).

The protein belongs to the bacterial solute-binding protein 2 family.

The protein resides in the periplasm. The chain is Myo-inositol-binding protein from Pseudomonas sp.